The sequence spans 489 residues: Glutamyl-tRNA(Gln) amidotransferase subunit A (489 aa).

Residues K80 and S160 each act as charge relay system in the active site. S184 serves as the catalytic Acyl-ester intermediate.

This sequence belongs to the amidase family. GatA subfamily. As to quaternary structure, heterotrimer of A, B and C subunits.

The catalysed reaction is L-glutamyl-tRNA(Gln) + L-glutamine + ATP + H2O = L-glutaminyl-tRNA(Gln) + L-glutamate + ADP + phosphate + H(+). Allows the formation of correctly charged Gln-tRNA(Gln) through the transamidation of misacylated Glu-tRNA(Gln) in organisms which lack glutaminyl-tRNA synthetase. The reaction takes place in the presence of glutamine and ATP through an activated gamma-phospho-Glu-tRNA(Gln). The chain is Glutamyl-tRNA(Gln) amidotransferase subunit A from Wolbachia sp. subsp. Drosophila simulans (strain wRi).